We begin with the raw amino-acid sequence, 105 residues long: UPF0145 protein lpp0255 (105 aa).

Belongs to the UPF0145 family.

The sequence is that of UPF0145 protein lpp0255 from Legionella pneumophila (strain Paris).